A 345-amino-acid chain; its full sequence is Nicotinate-nucleotide--dimethylbenzimidazole phosphoribosyltransferase (345 aa).

The Proton acceptor role is filled by glutamate 312.

Belongs to the CobT family.

The enzyme catalyses 5,6-dimethylbenzimidazole + nicotinate beta-D-ribonucleotide = alpha-ribazole 5'-phosphate + nicotinate + H(+). It participates in nucleoside biosynthesis; alpha-ribazole biosynthesis; alpha-ribazole from 5,6-dimethylbenzimidazole: step 1/2. Functionally, catalyzes the synthesis of alpha-ribazole-5'-phosphate from nicotinate mononucleotide (NAMN) and 5,6-dimethylbenzimidazole (DMB). The sequence is that of Nicotinate-nucleotide--dimethylbenzimidazole phosphoribosyltransferase from Phocaeicola vulgatus (strain ATCC 8482 / DSM 1447 / JCM 5826 / CCUG 4940 / NBRC 14291 / NCTC 11154) (Bacteroides vulgatus).